The primary structure comprises 511 residues: MAYVLTETSAGYALLKASDKKIYKSSSLIQDLDSSDKVLKEFKIAAFSKFNSAANALEEANSIIEGKVSSQLEKLLEEIKKDKKSTLIVSETKLANAINKLGLNFNVVSDAVTLDIYRAIKEYLPELLPGMSDNDLSKMSLGLAHSIGRHKLKFSADKVDVMIIQAIALLDDLDKELNTYAMRCKEWYGWHFPELAKIVTDSVAYARIILTMGIRSKASETDLSEILPEEIEERVKTAAEVSMGTEITQTDLDNINALAEQIVEFAAYREQLSNYLSARMKAIAPNLTQLVGELVGARLIAHSGSLISLAKSPASTIQILGAEKALFRALKTKHDTPKYGLLYHASLVGQATGKNKGKIARVLAAKAAVSLRYDALAEDRDDSGDIGLESRAKVENRLSQLEGRDLRTTPKVVREAKKVEMTEARAYNADADTAKAASDSESDSDDEEEEKKEKKEKKRKRDDDEDSKDSKKAKKEKKDKKEKKEKKEKKEKKEKKEKKEKKSKKEKKEKK.

Lys281 is covalently cross-linked (Glycyl lysine isopeptide (Lys-Gly) (interchain with G-Cter in ubiquitin)). A Nop domain is found at 283 to 403 (IAPNLTQLVG…VENRLSQLEG (121 aa)). A disordered region spans residues 423–511 (EARAYNADAD…KSKKEKKEKK (89 aa)). Residues 435-511 (KAASDSESDS…KSKKEKKEKK (77 aa)) adopt a coiled-coil conformation. Over residues 440–450 (SESDSDDEEEE) the composition is skewed to acidic residues. Residues 471–511 (KKAKKEKKDKKEKKEKKEKKEKKEKKEKKEKKSKKEKKEKK) show a composition bias toward basic residues.

Belongs to the NOP5/NOP56 family. In terms of assembly, interacts with SIK1/NOP56 and NOP1. Interacts with the trimethylguanosine synthase TGS1. Component of the ribosomal small subunit (SSU) processome composed of at least 40 protein subunits and snoRNA U3.

The protein resides in the nucleus. It is found in the nucleolus. Required for pre-18S rRNA processing. May bind microtubules. The polypeptide is Nucleolar protein 58 (NOP58) (Saccharomyces cerevisiae (strain ATCC 204508 / S288c) (Baker's yeast)).